Here is a 458-residue protein sequence, read N- to C-terminus: MLPDFMLVLIVLGIPSSATTGFNSIAENEDALLRHLFQGYQKWVRPVLHSNDTIKVYFGLKISQLVDVDEKNQLMTTNVWLKQEWTDHKLRWNPDDYGGIHSIKVPSESLWLPDIVLFENADGRFEGSLMTKVIVKSNGTVVWTPPASYKSSCTMDVTFFPFDRQNCSMKFGSWTYDGTMVDLILINENVDRKDFFDNGEWEILNAKGMKGNRRDGVYSYPFITYSFVLRRLPLFYTLFLIIPCLGLSFLTVLVFYLPSDEGEKLSLSTSVLVSLTVFLLVIEEIIPSSSKVIPLIGEYLLFIMIFVTLSIIVTVFVINVHHRSSSTYHPMAPWVKRLFLQKLPKLLCMKDHVDRYSSPEKEESQPVVKGKVLEKKKQKQLSDGEKVLVAFLEKAADSIRYISRHVKKEHFISQVVQDWKFVAQVLDRIFLWLFLIVSVTGSVLIFTPALKMWLHSYH.

Positions 1–21 (MLPDFMLVLIVLGIPSSATTG) are cleaved as a signal peptide. The Extracellular portion of the chain corresponds to 22 to 237 (FNSIAENEDA…VLRRLPLFYT (216 aa)). Residues Asn-51, Asn-138, and Asn-166 are each glycosylated (N-linked (GlcNAc...) asparagine). A disulfide bridge links Cys-153 with Cys-167. 3 consecutive transmembrane segments (helical) span residues 238 to 258 (LFLI…FYLP), 267 to 287 (LSTS…EIIP), and 300 to 320 (LLFI…VINV). The Cytoplasmic portion of the chain corresponds to 321 to 428 (HHRSSSTYHP…WKFVAQVLDR (108 aa)). Residues 429 to 449 (IFLWLFLIVSVTGSVLIFTPA) traverse the membrane as a helical segment.

This sequence belongs to the ligand-gated ion channel (TC 1.A.9) family. Acetylcholine receptor (TC 1.A.9.1) subfamily. Beta-3/CHRNB3 sub-subfamily. Neuronal AChR seems to be composed of two different type of subunits: alpha and beta. CHRNB3/beta-3 subunit is only able to form functional nAChRs when co-assembled with another beta subunit. Participates in pentameric assemblies along with CHRNA4/alpha-4 and CHRNB2/beta-2 subunits and with CHRNA6/alpha-6 as well, forming stoichiometries such as (CHRNA3:CHRNB4)2:CHRNB3, (CHRNA4:CHRNB2)2:CHRNB3 or (CHRNA6:CHRNB2)2:CHRNB3.

It localises to the synaptic cell membrane. The protein localises to the cell membrane. The catalysed reaction is Ca(2+)(in) = Ca(2+)(out). It carries out the reaction K(+)(in) = K(+)(out). The enzyme catalyses Na(+)(in) = Na(+)(out). Activated by a myriad of ligands such as acetylcholine, cytisine, nicotine, choline and epibatidine. Component of neuronal acetylcholine receptors (nAChRs) that function as pentameric, ligand-gated cation channels with high calcium permeability among other activities. nAChRs are excitatory neurotrasnmitter receptors formed by a collection of nAChR subunits known to mediate synaptic transmission in the nervous system and the neuromuscular junction. Each nAchR subunit confers differential attributes to channel properties, including activation, deactivation and desensitization kinetics, pH sensitivity, cation permeability, and binding to allosteric modulators. Has an accessory rather than functional role and is only able to form functional nAChRs when co-assembled with another beta subunit. Participates in pentameric assemblies along with CHRNA3, CHRNA4, CHRNA6, CHRNB2 and CHRNB4. Modulates receptor assembly and increases receptor sensitivity to nicotine when associated with CHRNB2, CHRNA4 and/or CHRNA6 as well as CHRNA3 and CHRNB4. Seems to play a role in nicotine addiction. The protein is Neuronal acetylcholine receptor subunit beta-3 of Homo sapiens (Human).